We begin with the raw amino-acid sequence, 2542 residues long: Talin-2 (2542 aa).

Residues 88-406 enclose the FERM domain; it reads RPQKIRMLDG…GYIDIILKKK (319 aa). Residues 312–406 are interaction with PIP5K1C; it reads GVSFFLVKEK…GYIDIILKKK (95 aa). Residues S428, S449, S623, and S1023 each carry the phosphoserine modification. The residue at position 1665 (Y1665) is a Phosphotyrosine. Residue T1843 is modified to Phosphothreonine. The 240-residue stretch at 2294 to 2533 folds into the I/LWEQ domain; the sequence is TEWVDPEDPT…QIRQQQYKFL (240 aa).

In terms of assembly, interacts directly with PIP5K1C.

The protein localises to the cytoplasm. It is found in the cell junction. Its subcellular location is the focal adhesion. The protein resides in the synapse. It localises to the cell membrane. The protein localises to the cytoskeleton. Its function is as follows. As a major component of focal adhesion plaques that links integrin to the actin cytoskeleton, may play an important role in cell adhesion. Recruits PIP5K1C to focal adhesion plaques and strongly activates its kinase activity. This is Talin-2 (TLN2) from Homo sapiens (Human).